The chain runs to 163 residues: Succinate dehydrogenase assembly factor 2-A, mitochondrial (163 aa).

The transit peptide at 1-23 (MLRQLRLTMDISGWIFLPWRRSM) directs the protein to the mitochondrion.

It belongs to the SDHAF2 family. In terms of assembly, interacts with the flavoprotein subunit within the SDH catalytic dimer.

It is found in the mitochondrion matrix. Functionally, plays an essential role in the assembly of succinate dehydrogenase (SDH), an enzyme complex (also referred to as respiratory complex II) that is a component of both the tricarboxylic acid (TCA) cycle and the mitochondrial electron transport chain, and which couples the oxidation of succinate to fumarate with the reduction of ubiquinone (coenzyme Q) to ubiquinol. Required for flavinylation (covalent attachment of FAD) of the flavoprotein subunit of the SDH catalytic dimer. The polypeptide is Succinate dehydrogenase assembly factor 2-A, mitochondrial (Drosophila sechellia (Fruit fly)).